The sequence spans 612 residues: tRNA 5-methylaminomethyl-2-thiouridine biosynthesis bifunctional protein MnmC (612 aa).

The tract at residues 1–218 (MITFRGDGLY…KREILEASLE (218 aa)) is tRNA (mnm(5)s(2)U34)-methyltransferase. The FAD-dependent cmnm(5)s(2)U34 oxidoreductase stretch occupies residues 244 to 612 (IGAGVAGLAA…VRKLKRGLVR (369 aa)).

In the N-terminal section; belongs to the methyltransferase superfamily. tRNA (mnm(5)s(2)U34)-methyltransferase family. This sequence in the C-terminal section; belongs to the DAO family. Requires FAD as cofactor.

The protein resides in the cytoplasm. It carries out the reaction 5-aminomethyl-2-thiouridine(34) in tRNA + S-adenosyl-L-methionine = 5-methylaminomethyl-2-thiouridine(34) in tRNA + S-adenosyl-L-homocysteine + H(+). Its function is as follows. Catalyzes the last two steps in the biosynthesis of 5-methylaminomethyl-2-thiouridine (mnm(5)s(2)U) at the wobble position (U34) in tRNA. Catalyzes the FAD-dependent demodification of cmnm(5)s(2)U34 to nm(5)s(2)U34, followed by the transfer of a methyl group from S-adenosyl-L-methionine to nm(5)s(2)U34, to form mnm(5)s(2)U34. The protein is tRNA 5-methylaminomethyl-2-thiouridine biosynthesis bifunctional protein MnmC of Campylobacter fetus subsp. fetus (strain 82-40).